The chain runs to 467 residues: Probable citrate synthase 2, mitochondrial (467 aa).

Catalysis depends on residues histidine 303, histidine 349, and aspartate 404.

Belongs to the citrate synthase family. As to quaternary structure, homodimer.

It localises to the mitochondrion matrix. The enzyme catalyses oxaloacetate + acetyl-CoA + H2O = citrate + CoA + H(+). It functions in the pathway carbohydrate metabolism; tricarboxylic acid cycle; isocitrate from oxaloacetate: step 1/2. The polypeptide is Probable citrate synthase 2, mitochondrial (Aedes aegypti (Yellowfever mosquito)).